The following is a 66-amino-acid chain: Large ribosomal subunit protein uL29 (66 aa).

It belongs to the universal ribosomal protein uL29 family.

In Bartonella tribocorum (strain CIP 105476 / IBS 506), this protein is Large ribosomal subunit protein uL29.